The chain runs to 673 residues: Synaptotagmin-like protein 4 (673 aa).

Residues 4-122 enclose the RabBD domain; it reads ILDLSFLSEM…KATGDWFYDQ (119 aa). The FYVE-type zinc-finger motif lies at 63 to 105; it reads CARCQEGLGRLIPKSSTCVGCNHLVCRECRVLESNGSWRCKVC. Residues 184-253 are disordered; it reads FEVPKTRSGK…PGNQNAVCGD (70 aa). Residues Ser-202, Ser-205, Ser-218, Ser-222, and Ser-275 each carry the phosphoserine modification. The region spanning 358 to 480 is the C2 1 domain; that stretch reads VTGKIAFSLK…KLDKKLDHCL (123 aa). A Phosphoserine modification is found at Ser-490. Residues 509 to 635 enclose the C2 2 domain; it reads PASKLPVGGD…ISNGEVVDWM (127 aa).

In terms of assembly, part of a ternary complex containing STX1A and RAB27A. Can bind both dominant negative and dominant active mutants of RAB27A. Binds STXBP1, RAB3A, RAB8A and RAB27B. Interacts with MYO5A. Detected in the pancreatic islet, in particular in insulin-positive beta cells, and in pituitary.

It is found in the membrane. The protein localises to the cytoplasmic vesicle. The protein resides in the secretory vesicle membrane. In terms of biological role, modulates exocytosis of dense-core granules and secretion of hormones in the pancreas and the pituitary. Interacts with vesicles containing negatively charged phospholipids in a Ca(2+)-independent manner. The chain is Synaptotagmin-like protein 4 (Sytl4) from Mus musculus (Mouse).